Reading from the N-terminus, the 199-residue chain is MSFYAAPIARLIEEFEKLPGIGHKTAQRLAFYVLDMPQEKVDRLANAITEAKQKTKFCSVCGNLTDTDVCPLCSSEKRDSSVICVVEDPRDVVAMEKIREFKGLYHVLHGAISPMQGIGPEDIKIKELLDRIKEGNVKEVIIATNPNIEGEATAMYISKLIKPLGVKTTRIAHGIPVGGDLEYADEVTLAKALEGRREI.

Residues 58 to 73 (CSVCGNLTDTDVCPLC) form a C4-type zinc finger. In terms of domain architecture, Toprim spans 81 to 176 (SVICVVEDPR…KTTRIAHGIP (96 aa)).

The protein belongs to the RecR family.

In terms of biological role, may play a role in DNA repair. It seems to be involved in an RecBC-independent recombinational process of DNA repair. It may act with RecF and RecO. The protein is Recombination protein RecR of Acetivibrio thermocellus (strain ATCC 27405 / DSM 1237 / JCM 9322 / NBRC 103400 / NCIMB 10682 / NRRL B-4536 / VPI 7372) (Clostridium thermocellum).